Consider the following 317-residue polypeptide: TPR repeat-containing thioredoxin TDX (317 aa).

The tract at residues 1-48 (MATAGASSFEDEIMESDIELEGEAVEPDNDPPQKMGDPSVEVSDEKRD) is disordered. Acidic residues predominate over residues 9–29 (FEDEIMESDIELEGEAVEPDN). 3 TPR repeats span residues 50–83 (AQLCKNKGVDAFSEGKLDEAIEHLTEAIVLNPTS), 85–117 (IAYATRAVIFVKSKKPNAAIRDADAALKINPDS), and 119–151 (KGYKSRGMAKAMLGKWEEAAQDLRMAAKLDYDE). Positions 189–316 (EKQRKHAEEV…LERKVAQHGS (128 aa)) constitute a Thioredoxin domain. Catalysis depends on nucleophile residues C242 and C245. C242 and C245 form a disulfide bridge.

Belongs to the thioredoxin family.

Probable thiol-disulfide oxidoreductase that may participate in various redox reactions and act as chaperone under heat shock. May interact with HSP70 proteins through the TPR repeats. This Oryza sativa subsp. japonica (Rice) protein is TPR repeat-containing thioredoxin TDX.